The sequence spans 43 residues: Photosystem II reaction center protein Y (43 aa).

Residues 8–26 (LFLVVAPILAAVSWAAFNI) traverse the membrane as a helical segment.

It belongs to the PsbY family. As to quaternary structure, PSII is composed of 1 copy each of membrane proteins PsbA, PsbB, PsbC, PsbD, PsbE, PsbF, PsbH, PsbI, PsbJ, PsbK, PsbL, PsbM, PsbT, PsbX, PsbY, PsbZ, Psb30/Ycf12, peripheral proteins PsbO, CyanoQ (PsbQ), PsbU, PsbV and a large number of cofactors. It forms dimeric complexes.

The protein resides in the cellular thylakoid membrane. Functionally, loosely associated component of the core of photosystem II (PSII), it is not always seen in crystals. PSII is a light-driven water plastoquinone oxidoreductase, using light energy to abstract electrons from H(2)O, generating a proton gradient subsequently used for ATP formation. The protein is Photosystem II reaction center protein Y of Parasynechococcus marenigrum (strain WH8102).